A 372-amino-acid chain; its full sequence is Alanine dehydrogenase 1 (372 aa).

Residue histidine 94 is part of the active site. An NAD(+)-binding site is contributed by 170 to 200 (TYVIFGGGVAATNAANVALGLNAKVIIIELN).

Belongs to the AlaDH/PNT family.

It catalyses the reaction L-alanine + NAD(+) + H2O = pyruvate + NH4(+) + NADH + H(+). It functions in the pathway amino-acid degradation; L-alanine degradation via dehydrogenase pathway; NH(3) and pyruvate from L-alanine: step 1/1. Its function is as follows. May play a role in cell wall synthesis as L-alanine is an important constituent of the peptidoglycan layer. This chain is Alanine dehydrogenase 1 (ald1), found in Staphylococcus aureus (strain NCTC 8325 / PS 47).